The chain runs to 216 residues: Small ribosomal subunit protein uS3c (216 aa).

The region spanning 43–115 (FENDWGTLYN…QTRIKVIQVN (73 aa)) is the KH type-2 domain.

The protein belongs to the universal ribosomal protein uS3 family. As to quaternary structure, part of the 30S ribosomal subunit.

The protein resides in the plastid. The protein localises to the chloroplast. This Emiliania huxleyi (Coccolithophore) protein is Small ribosomal subunit protein uS3c (rps3).